Reading from the N-terminus, the 280-residue chain is 3-methyl-2-oxobutanoate hydroxymethyltransferase (280 aa).

Mg(2+)-binding residues include Asp61 and Asp100. Residues 61–62, Asp100, and Lys130 each bind 3-methyl-2-oxobutanoate; that span reads DS. Glu132 serves as a coordination point for Mg(2+). Residue Glu198 is the Proton acceptor of the active site.

Belongs to the PanB family. As to quaternary structure, homodecamer; pentamer of dimers. It depends on Mg(2+) as a cofactor.

It is found in the cytoplasm. It carries out the reaction 3-methyl-2-oxobutanoate + (6R)-5,10-methylene-5,6,7,8-tetrahydrofolate + H2O = 2-dehydropantoate + (6S)-5,6,7,8-tetrahydrofolate. It participates in cofactor biosynthesis; (R)-pantothenate biosynthesis; (R)-pantoate from 3-methyl-2-oxobutanoate: step 1/2. Functionally, catalyzes the reversible reaction in which hydroxymethyl group from 5,10-methylenetetrahydrofolate is transferred onto alpha-ketoisovalerate to form ketopantoate. In Mycolicibacterium vanbaalenii (strain DSM 7251 / JCM 13017 / BCRC 16820 / KCTC 9966 / NRRL B-24157 / PYR-1) (Mycobacterium vanbaalenii), this protein is 3-methyl-2-oxobutanoate hydroxymethyltransferase.